Here is a 92-residue protein sequence, read N- to C-terminus: Small ribosomal subunit protein uS19c (92 aa).

The protein belongs to the universal ribosomal protein uS19 family.

The protein localises to the plastid. It localises to the chloroplast. Its function is as follows. Protein S19 forms a complex with S13 that binds strongly to the 16S ribosomal RNA. This Lobularia maritima (Sweet alyssum) protein is Small ribosomal subunit protein uS19c.